Consider the following 227-residue polypeptide: UPF0173 metal-dependent hydrolase BC_4613 (227 aa).

It belongs to the UPF0173 family.

The protein is UPF0173 metal-dependent hydrolase BC_4613 of Bacillus cereus (strain ATCC 14579 / DSM 31 / CCUG 7414 / JCM 2152 / NBRC 15305 / NCIMB 9373 / NCTC 2599 / NRRL B-3711).